We begin with the raw amino-acid sequence, 2364 residues long: MTVSNNKKFEENYVLASDIEEKEKLLGTLIGGSPQYFYYNVIHLLNVDPTLSDSKNREKYQKLMKDWSPESKPIPVTPYGGNNNYESTQQYKSVDLRQKLLSFRQDNVNPSALANNVNDMFEELRYLLSLTFSYTQTTHQTSPTTETTTTPSSSSSSSHDDKSESTLDESLVNKKTVIESIINQYPYKVDYISPNSFEYVLNNFTLPESAEKSIVQKLKYPIVPNDKLQQLLSHHKGSFGSLKIHENLTLEQMEKHIEKNPEHLDSAYVKLYLEKLLPTNELHDWETLKPVQEQFYQSASKFVSNLPTSLNTFKLLIYHHYIKFQISDNKYDQSIIEKYFQLPRDTYYYVEPDRLKSNPQLSKFNDSFNGLKSVSQDDDEKLISFLLKKLFLKENSIKSYQSYFRPNYLNLILAESKLLSNDSSPEKWIEMIDNHTKVQELKDRVDIEFLPTNREYYHPDDDVVIECAIKNVNTLLVKVFEISTFNYYKSENKKIDSNINLDGLIASQELSFDYSEQAPIEKVEKKFDFPNLKGKRGIFVIEFIGNGKSSRSMIQKGDLHFIVETSPIGQVIKIIDQDSIKVQKSSVYIDGNAYNSNDDGDIKIPFSSSTSQKSIILMAKIGDSDVFASLKKFTHQSEHYSLSGGIFVENSSLLQNEKAPIVVRVKLFLGDTQISNNYLEEPSLTITSSDNSESPVVNSKEIKPFALFDNKESVYQYKVQEGLNSLTVRFEAKVRALSRNNNQETLSFESTFQVNTINQTDQISEFYLERCLAKDGCSLGYQLCHLGKGGDPFSHLDVSMDFQHWLTSERIYTTLKTDKNGKIHLGSLADIEQLNVNGSYATFNFPIKRQQQFTYPSQINIKLGETIRLPYLGNEKSVSHSQINFFQLGGVDDRNFVVHDLLKKSVTIENKNELLINGLGVGRYLLILAGSIQSSNTVEILIDVVDGQFREGYLVGPSRIVSYNESNVKSLFFDTNIDTKHNQLQVKFKNHSPSTRVHVFSSYFEPTNSLNSSLSLSRGTSQSYQEYSVKPKSLYFNGRSLGDEVNYILNRKTSKKLLPGNSLKKPSLLVQPWSIGKTTNSTNTLKQASKYNESEVKDEKSMRNRQVEKRRVSSTNRSPFLEFLSHPSILLLNLEPSSTDGIVNIDLSQLVEAGSTIHIHAVDNDSIFTKEIVISDPSSSSSINHFKDTKLVRPLDSSLHYKEEKLITTVEPNSPFEILNVNSSKYTVYDSLDKVLSLMKTLNKSYLQDFSFIAEWESLSFEKKKEKFSKFTCHELNFFIYKKDKEFFDQVVLPLVQTKGYKTFIDHYLCADRKKLEIFVIDSNRFNTLNALEMVLLGELFPEHSDSISNLLKQKVGFSPISPSQYDTNFKIALNQLDTDIESLKSGDDDLYDDGSNLEPMSVGGGGGFGYNNNSNNNNNTTNSNSFGDAKRAPMKKKMVNKESTSLMMDCAAPMMMMASAPCPAPGAVPMAALRSARLASASPAPPAPITRAYEAAQIYQPIEKTEELAETYYYKQLNPHSSLIPVNEFWLDYANHIKSQSKTPFVSKYIAFISSSFAESMMALSVLDFPFTVKDNTTQVRPKNGKLSMKPTTPIVVFHQELVSGSIEKQSDILVTQHFFDPQNQFTYIDGEQEELYINDQFLVSKVYGAMVVIANLSSKQKKLDALLEIPKGSIAVGPSPFVTRSKSVNLSAYSTTRLQYYFYFPEAGKFPHFPAHVSEKQNIIANVTPFTFSVVLKPSIVNHLSWEYIANQGTLESILEYLSKNNLYRVDFYHLYHRYTDKKVWDKVIELLKKLKFYESITWSFSIHHKNFVYLKDYLSEQIHSLSMKSIDAPSIYVDPFENNFIKFLEYSPLVNSRTHQIGDERKILNNKLSNQYYEFCSLLSLKLNPSDTELLSLAYYLLLQDRFDESIKIMKRIGKHPVSIPKLISSSTTTDSKSTHSSVISSSSSSNLSTTTDSSKDKKKLEKEEKQREKERKQKEKEDKKREKEELKKKEKEEKKKKEEEKKLKKKSGSEATSPSVDPATPTTTTTTEATTTTTTTTATSQESIKPEKIASDDEHDDHHHDEHDEEDDDDEPLIDMSEFNQPSCLPEMKVQYDYLLSYLDFFNPNPTVAAENSKKYENYPVQRWNSLFKDLRNKVDQVSNKDSVEIDYEKEIDRERRQNKMASNEPTFDISSESNRTISVNYSNLVDITVSYYVMDIEHLFSTNPFVQQELGHFLYVTPNKKESFLLKDKSGTFNFKIPNEFANSNVVIDVVSAQIHHNITVYSNNLAVYITEKVGQLRVVHKQKSQPISKTYIKVYSKNKNGSVEFFKDGYTDIAGYFDYSTVSSLDISNVSKLSILVLSNQYGAVIKEAKPPGF.

Residues 138–157 are compositionally biased toward low complexity; sequence THQTSPTTETTTTPSSSSSS. Disordered regions lie at residues 138 to 168, 1087 to 1111, 1412 to 1435, and 1929 to 2088; these read THQT…STLD, QASK…EKRR, NNNS…RAPM, and KLIS…SEFN. Residues 1092 to 1111 show a composition bias toward basic and acidic residues; the sequence is NESEVKDEKSMRNRQVEKRR. 2 stretches are compositionally biased toward low complexity: residues 1412–1428 and 1932–1960; these read NNNS…NSFG and SSST…TTTD. Residues 1960-2017 adopt a coiled-coil conformation; sequence DSSKDKKKLEKEEKQREKERKQKEKEDKKREKEELKKKEKEEKKKKEEEKKLKKKSGS. The segment covering 1961–2010 has biased composition (basic and acidic residues); that stretch reads SSKDKKKLEKEEKQREKERKQKEKEDKKREKEELKKKEKEEKKKKEEEKK. Over residues 2027–2047 the composition is skewed to low complexity; the sequence is ATPTTTTTTEATTTTTTTTAT. Residues 2052–2070 show a composition bias toward basic and acidic residues; sequence IKPEKIASDDEHDDHHHDE. Residues 2071 to 2081 show a composition bias toward acidic residues; it reads HDEEDDDDEPL. Positions 2129–2173 form a coiled coil; sequence VQRWNSLFKDLRNKVDQVSNKDSVEIDYEKEIDRERRQNKMASNE.

As to quaternary structure, interacts with actin.

Its subcellular location is the nucleus. The protein resides in the cytoplasm. The protein localises to the cytoskeleton. The sequence is that of Actin-binding protein F (abpF) from Dictyostelium discoideum (Social amoeba).